The sequence spans 368 residues: tRNA-specific 2-thiouridylase MnmA (368 aa).

ATP is bound by residues 11 to 18 (GMSGGVDS) and Met37. The segment at 97-99 (NPD) is interaction with target base in tRNA. Cys102 functions as the Nucleophile in the catalytic mechanism. Cys102 and Cys199 are oxidised to a cystine. Residue Gly127 participates in ATP binding. Residues 149-151 (KDQ) are interaction with tRNA. Cys199 functions as the Cysteine persulfide intermediate in the catalytic mechanism. An interaction with tRNA region spans residues 311–312 (RY).

This sequence belongs to the MnmA/TRMU family. Interacts with TusE.

It is found in the cytoplasm. It carries out the reaction S-sulfanyl-L-cysteinyl-[protein] + uridine(34) in tRNA + AH2 + ATP = 2-thiouridine(34) in tRNA + L-cysteinyl-[protein] + A + AMP + diphosphate + H(+). In terms of biological role, catalyzes the 2-thiolation of uridine at the wobble position (U34) of tRNA(Lys), tRNA(Glu) and tRNA(Gln), leading to the formation of s(2)U34, the first step of tRNA-mnm(5)s(2)U34 synthesis. Sulfur is provided by IscS, via a sulfur-relay system. Binds ATP and its substrate tRNAs. The sequence is that of tRNA-specific 2-thiouridylase MnmA from Shigella boydii serotype 4 (strain Sb227).